The sequence spans 167 residues: Ubiquitin-fold modifier-conjugating enzyme 1 (167 aa).

The active-site Glycyl thioester intermediate is the Cys-116.

Belongs to the ubiquitin-conjugating enzyme family. UFC1 subfamily. Interacts with UBA5 (via C-terminus). Interacts with UFL1. Interacts with UFM1.

In terms of biological role, E2-like enzyme which specifically catalyzes the second step in ufmylation. Accepts the ubiquitin-like modifier UFM1 from the E1 enzyme UBA5 and forms an intermediate with UFM1 via a thioester linkage. Ufmylation is involved in various processes, such as ribosome recycling, response to DNA damage, interferon response or reticulophagy (also called ER-phagy). The protein is Ubiquitin-fold modifier-conjugating enzyme 1 of Salmo salar (Atlantic salmon).